The sequence spans 354 residues: Tyrosine recombinase XerH (354 aa).

In terms of domain architecture, Core-binding (CB) spans L48–D134. Residues K163–Q346 enclose the Tyr recombinase domain. Catalysis depends on residues R205, K231, H298, R301, and H324. The active-site O-(3'-phospho-DNA)-tyrosine intermediate is Y333.

This sequence belongs to the 'phage' integrase family. XerH subfamily.

It localises to the cytoplasm. Its activity is regulated as follows. FtsK is required for efficient recombination. In terms of biological role, site-specific tyrosine recombinase, which acts by catalyzing the cutting and rejoining of the recombining DNA molecules. Binds to the complete atypical dif motif (difH) site and to both halves separately. The polypeptide is Tyrosine recombinase XerH (Campylobacter jejuni subsp. jejuni serotype O:2 (strain ATCC 700819 / NCTC 11168)).